The sequence spans 189 residues: 3-isopropylmalate dehydratase small subunit (189 aa).

Belongs to the LeuD family. LeuD type 1 subfamily. As to quaternary structure, heterodimer of LeuC and LeuD.

It catalyses the reaction (2R,3S)-3-isopropylmalate = (2S)-2-isopropylmalate. The protein operates within amino-acid biosynthesis; L-leucine biosynthesis; L-leucine from 3-methyl-2-oxobutanoate: step 2/4. Catalyzes the isomerization between 2-isopropylmalate and 3-isopropylmalate, via the formation of 2-isopropylmaleate. The chain is 3-isopropylmalate dehydratase small subunit from Staphylococcus epidermidis (strain ATCC 35984 / DSM 28319 / BCRC 17069 / CCUG 31568 / BM 3577 / RP62A).